The sequence spans 534 residues: Inosine-5'-monophosphate dehydrogenase (534 aa).

2 consecutive CBS domains span residues 117-181 (YVMQ…GTPI) and 190-255 (TTPI…PMAS). NAD(+) contacts are provided by residues 292-294 (DSS) and 342-344 (GMG). Residues Gly-344 and Gly-346 each coordinate K(+). Ser-347 is a binding site for IMP. Cys-349 is a binding site for K(+). Cys-349 serves as the catalytic Thioimidate intermediate. Residues 382 to 384 (DGG), 405 to 406 (GG), and 430 to 434 (YRGMG) each bind IMP. The Proton acceptor role is filled by Arg-448. Gln-461 provides a ligand contact to IMP. Glu-520, Gly-521, and Gly-522 together coordinate K(+).

It belongs to the IMPDH/GMPR family. Homotetramer. K(+) is required as a cofactor.

The protein resides in the cytoplasm. It catalyses the reaction IMP + NAD(+) + H2O = XMP + NADH + H(+). It functions in the pathway purine metabolism; XMP biosynthesis via de novo pathway; XMP from IMP: step 1/1. With respect to regulation, mycophenolic acid (MPA) is a non-competitive inhibitor that prevents formation of the closed enzyme conformation by binding to the same site as the amobile flap. In contrast, mizoribine monophosphate (MZP) is a competitive inhibitor that induces the closed conformation. MPA is a potent inhibitor of mammalian IMPDHs but a poor inhibitor of the bacterial enzymes. MZP is a more potent inhibitor of bacterial IMPDH. Functionally, catalyzes the conversion of inosine 5'-phosphate (IMP) to xanthosine 5'-phosphate (XMP), the first committed and rate-limiting step in the de novo synthesis of guanine nucleotides, and therefore plays an important role in the regulation of cell growth. In Caenorhabditis elegans, this protein is Inosine-5'-monophosphate dehydrogenase.